We begin with the raw amino-acid sequence, 376 residues long: Growth/differentiation factor 8 (376 aa).

Residues 1-22 form the signal peptide; that stretch reads MHLSQIVLYLSLLIALGPVVLS. Positions 23–267 are excised as a propeptide; sequence DQEAHQQPSV…ISEGPRRARR (245 aa). Disulfide bonds link Cys273-Cys283, Cys282-Cys341, Cys310-Cys373, and Cys314-Cys375.

The protein belongs to the TGF-beta family. In terms of assembly, homodimer; disulfide-linked. In terms of tissue distribution, highly expressed in muscle. Also expressed in other tissues such as eye, gill, ovary, gut and brain. Very low level detected in testis. Not expressed in liver, kidney, stomach or heart.

It localises to the secreted. Functionally, acts specifically as a negative regulator of skeletal muscle growth. The sequence is that of Growth/differentiation factor 8 from Oreochromis mossambicus (Mozambique tilapia).